Reading from the N-terminus, the 254-residue chain is MGVAVRVIPCLDVAAGRVVKGVNFQNLRDQGDPVEFARRYAEQGADELTFLDVTATVDDRSTTYDVVRATAGQVFIPLTVGGGVRSTEDVARLLGSGADKVGVNSAAIARPGLVAEIADRFGAQVLVLSLDVKRSASTDSGFAVTTHGGRTETGLDALEWAARAIELGAGELLVNSIDADGTKEGFDLELIREMRALSAVPVIASGGAGKTADFAPALRAGADAVLAASVFHSGELTIGDVKTALAAAGMEVRP.

Active-site residues include aspartate 12 and aspartate 131.

Belongs to the HisA/HisF family. In terms of assembly, heterodimer of HisH and HisF.

The protein localises to the cytoplasm. The catalysed reaction is 5-[(5-phospho-1-deoxy-D-ribulos-1-ylimino)methylamino]-1-(5-phospho-beta-D-ribosyl)imidazole-4-carboxamide + L-glutamine = D-erythro-1-(imidazol-4-yl)glycerol 3-phosphate + 5-amino-1-(5-phospho-beta-D-ribosyl)imidazole-4-carboxamide + L-glutamate + H(+). The protein operates within amino-acid biosynthesis; L-histidine biosynthesis; L-histidine from 5-phospho-alpha-D-ribose 1-diphosphate: step 5/9. In terms of biological role, IGPS catalyzes the conversion of PRFAR and glutamine to IGP, AICAR and glutamate. The HisF subunit catalyzes the cyclization activity that produces IGP and AICAR from PRFAR using the ammonia provided by the HisH subunit. The protein is Imidazole glycerol phosphate synthase subunit HisF of Leifsonia xyli subsp. xyli (strain CTCB07).